The sequence spans 437 residues: Methylenetetrahydrofolate--tRNA-(uracil-5-)-methyltransferase TrmFO (437 aa).

FAD is bound at residue 10–15 (GAGLAG).

This sequence belongs to the MnmG family. TrmFO subfamily. FAD serves as cofactor.

It localises to the cytoplasm. The enzyme catalyses uridine(54) in tRNA + (6R)-5,10-methylene-5,6,7,8-tetrahydrofolate + NADH + H(+) = 5-methyluridine(54) in tRNA + (6S)-5,6,7,8-tetrahydrofolate + NAD(+). It catalyses the reaction uridine(54) in tRNA + (6R)-5,10-methylene-5,6,7,8-tetrahydrofolate + NADPH + H(+) = 5-methyluridine(54) in tRNA + (6S)-5,6,7,8-tetrahydrofolate + NADP(+). In terms of biological role, catalyzes the folate-dependent formation of 5-methyl-uridine at position 54 (M-5-U54) in all tRNAs. This chain is Methylenetetrahydrofolate--tRNA-(uracil-5-)-methyltransferase TrmFO, found in Lysinibacillus sphaericus (strain C3-41).